The primary structure comprises 263 residues: Phosphatidylserine decarboxylase proenzyme (263 aa).

Active-site charge relay system; for autoendoproteolytic cleavage activity residues include Asp-90, His-146, and Ser-230. The active-site Schiff-base intermediate with substrate; via pyruvic acid; for decarboxylase activity is the Ser-230. At Ser-230 the chain carries Pyruvic acid (Ser); by autocatalysis.

The protein belongs to the phosphatidylserine decarboxylase family. PSD-B subfamily. Prokaryotic type I sub-subfamily. As to quaternary structure, heterodimer of a large membrane-associated beta subunit and a small pyruvoyl-containing alpha subunit. The cofactor is pyruvate. Is synthesized initially as an inactive proenzyme. Formation of the active enzyme involves a self-maturation process in which the active site pyruvoyl group is generated from an internal serine residue via an autocatalytic post-translational modification. Two non-identical subunits are generated from the proenzyme in this reaction, and the pyruvate is formed at the N-terminus of the alpha chain, which is derived from the carboxyl end of the proenzyme. The autoendoproteolytic cleavage occurs by a canonical serine protease mechanism, in which the side chain hydroxyl group of the serine supplies its oxygen atom to form the C-terminus of the beta chain, while the remainder of the serine residue undergoes an oxidative deamination to produce ammonia and the pyruvoyl prosthetic group on the alpha chain. During this reaction, the Ser that is part of the protease active site of the proenzyme becomes the pyruvoyl prosthetic group, which constitutes an essential element of the active site of the mature decarboxylase.

It is found in the cell membrane. The catalysed reaction is a 1,2-diacyl-sn-glycero-3-phospho-L-serine + H(+) = a 1,2-diacyl-sn-glycero-3-phosphoethanolamine + CO2. It functions in the pathway phospholipid metabolism; phosphatidylethanolamine biosynthesis; phosphatidylethanolamine from CDP-diacylglycerol: step 2/2. Functionally, catalyzes the formation of phosphatidylethanolamine (PtdEtn) from phosphatidylserine (PtdSer). The protein is Phosphatidylserine decarboxylase proenzyme of Bacillus subtilis (strain 168).